The chain runs to 342 residues: Phosphoribosylformylglycinamidine cyclo-ligase (342 aa).

This sequence belongs to the AIR synthase family.

The protein resides in the cytoplasm. The enzyme catalyses 2-formamido-N(1)-(5-O-phospho-beta-D-ribosyl)acetamidine + ATP = 5-amino-1-(5-phospho-beta-D-ribosyl)imidazole + ADP + phosphate + H(+). Its pathway is purine metabolism; IMP biosynthesis via de novo pathway; 5-amino-1-(5-phospho-D-ribosyl)imidazole from N(2)-formyl-N(1)-(5-phospho-D-ribosyl)glycinamide: step 2/2. This chain is Phosphoribosylformylglycinamidine cyclo-ligase, found in Latilactobacillus sakei subsp. sakei (strain 23K) (Lactobacillus sakei subsp. sakei).